The chain runs to 884 residues: Protein translocase subunit SecA (884 aa).

Residues Gln-82, 100–104, and Asp-491 contribute to the ATP site; that span reads GEGKT.

Belongs to the SecA family.

It is found in the plastid. Its subcellular location is the chloroplast stroma. The protein resides in the chloroplast thylakoid membrane. It carries out the reaction ATP + H2O + cellular proteinSide 1 = ADP + phosphate + cellular proteinSide 2.. Has a central role in coupling the hydrolysis of ATP to the transfer of proteins across the thylakoid membrane. This Olisthodiscus luteus (Marine phytoflagellate) protein is Protein translocase subunit SecA.